The sequence spans 447 residues: UDP-N-acetylmuramate--L-alanine ligase (447 aa).

G108 to S114 contributes to the ATP binding site.

Belongs to the MurCDEF family.

It is found in the cytoplasm. The catalysed reaction is UDP-N-acetyl-alpha-D-muramate + L-alanine + ATP = UDP-N-acetyl-alpha-D-muramoyl-L-alanine + ADP + phosphate + H(+). The protein operates within cell wall biogenesis; peptidoglycan biosynthesis. Its function is as follows. Cell wall formation. This Listeria welshimeri serovar 6b (strain ATCC 35897 / DSM 20650 / CCUG 15529 / CIP 8149 / NCTC 11857 / SLCC 5334 / V8) protein is UDP-N-acetylmuramate--L-alanine ligase.